A 667-amino-acid polypeptide reads, in one-letter code: Probable potassium transport system protein Kup (667 aa).

A run of 12 helical transmembrane segments spans residues 16-36 (GFII…LYTM), 58-78 (VSLI…LIAL), 101-121 (WLII…ALTP), 146-166 (TNVI…QRFG), 167-187 (TGVI…VLGI), 221-241 (IFIL…YSDL), 253-273 (WPFV…WILA), 294-314 (VYLV…LISG), 343-363 (LYIP…VLYF), 373-393 (YGLA…YYLI), 399-419 (PLLA…FFLA), and 431-451 (VVVL…GTVI).

The protein belongs to the HAK/KUP transporter (TC 2.A.72) family.

The protein localises to the cell membrane. The enzyme catalyses K(+)(in) + H(+)(in) = K(+)(out) + H(+)(out). Functionally, transport of potassium into the cell. Likely operates as a K(+):H(+) symporter. In Streptococcus equi subsp. zooepidemicus (strain H70), this protein is Probable potassium transport system protein Kup.